A 67-amino-acid polypeptide reads, in one-letter code: uncharacterized protein (67 aa).

The signal sequence occupies residues 1–28; it reads MSHVSVIAARLLVWVGILLCLGVPQLWA. N-linked (GlcNAc...) asparagine; by host glycosylation occurs at asparagine 39.

This is an uncharacterized protein from Invertebrate iridescent virus 3 (IIV-3).